The chain runs to 22 residues: MICOS complex subunit MIC60 (22 aa).

It belongs to the MICOS complex subunit Mic60 family. Component of the mitochondrial contact site and cristae organizing system (MICOS) complex, composed of at least MICOS10/MIC10, CHCHD3/MIC19, CHCHD6/MIC25, APOOL/MIC27, IMMT/MIC60, APOO/MIC23/MIC26 and MICOS13/MIC13. This complex was also known under the names MINOS or MitOS complex. The MICOS complex associates with mitochondrial outer membrane proteins SAMM50, MTX1 and MTX2 (together described as components of the mitochondrial outer membrane sorting assembly machinery (SAM) complex) and DNAJC11, mitochondrial inner membrane protein TMEM11 and with HSPA9. The MICOS and SAM complexes together with DNAJC11 are part of a large protein complex spanning both membranes termed the mitochondrial intermembrane space bridging (MIB) complex. Interacts with HSPA1A/HSPA1B and OPA1, preferentially with the soluble OPA1 form. Interacts with MICOS13/MIC13, MICOS10/MIC10, CHCHD3/MIC19, CHCHD6/MIC25, SAMM50 and TMEM11. Interacts with APOO/MIC23/MIC26 and APOOL/MIC27. Interacts with ARMC1. Interacts with ARMC12.

Its subcellular location is the mitochondrion inner membrane. It localises to the mitochondrion. Its function is as follows. Component of the MICOS complex, a large protein complex of the mitochondrial inner membrane that plays crucial roles in the maintenance of crista junctions, inner membrane architecture, and formation of contact sites to the outer membrane. Plays an important role in the maintenance of the MICOS complex stability and the mitochondrial cristae morphology. The chain is MICOS complex subunit MIC60 from Mesocricetus auratus (Golden hamster).